We begin with the raw amino-acid sequence, 307 residues long: Oxygen-dependent coproporphyrinogen-III oxidase (307 aa).

Position 99 (S99) interacts with substrate. A divalent metal cation contacts are provided by H103 and H113. Catalysis depends on H113, which acts as the Proton donor. Residue 115–117 (NVR) coordinates substrate. A divalent metal cation contacts are provided by H152 and H182. Residues 247 to 282 (YVEFNLVFDRGTLFGLQSGGRTESILMSMPPVANWR) form an important for dimerization region. Residue 265 to 267 (GGR) coordinates substrate.

This sequence belongs to the aerobic coproporphyrinogen-III oxidase family. In terms of assembly, homodimer. A divalent metal cation is required as a cofactor.

Its subcellular location is the cytoplasm. The enzyme catalyses coproporphyrinogen III + O2 + 2 H(+) = protoporphyrinogen IX + 2 CO2 + 2 H2O. The protein operates within porphyrin-containing compound metabolism; protoporphyrin-IX biosynthesis; protoporphyrinogen-IX from coproporphyrinogen-III (O2 route): step 1/1. In terms of biological role, involved in the heme biosynthesis. Catalyzes the aerobic oxidative decarboxylation of propionate groups of rings A and B of coproporphyrinogen-III to yield the vinyl groups in protoporphyrinogen-IX. The sequence is that of Oxygen-dependent coproporphyrinogen-III oxidase from Burkholderia lata (strain ATCC 17760 / DSM 23089 / LMG 22485 / NCIMB 9086 / R18194 / 383).